We begin with the raw amino-acid sequence, 119 residues long: Beta-2-microglobulin (119 aa).

The first 20 residues, 1–20 (MARFVAVALLVLLSLSGLET), serve as a signal peptide directing secretion. An Ig-like C1-type domain is found at 25–114 (PKIQVYSRHP…VTFSTPKTVK (90 aa)). A disulfide bridge links Cys45 with Cys100.

It belongs to the beta-2-microglobulin family. Heterodimer of an alpha chain and a beta chain. Beta-2-microglobulin is the beta-chain of major histocompatibility complex class I molecules.

Its subcellular location is the secreted. Functionally, component of the class I major histocompatibility complex (MHC). Involved in the presentation of peptide antigens to the immune system. The protein is Beta-2-microglobulin (B2M) of Callicebus personatus personatus (Masked titi).